We begin with the raw amino-acid sequence, 364 residues long: Palmitoyltransferase ZDHHC9 (364 aa).

The Cytoplasmic portion of the chain corresponds to 1–35; sequence MSVMVVRKKVTRKWEKLPGRNTFCCDGRVMMARQK. The helical transmembrane segment at 36–56 threads the bilayer; that stretch reads GIFYLTLFLILGTCTLFFAFE. Residues 57-63 are Lumenal-facing; sequence CRYLAVQ. Residues 64–84 form a helical membrane-spanning segment; that stretch reads LSPAIPVFAAMLFLFSMATLL. Residues 85-183 lie on the Cytoplasmic side of the membrane; the sequence is RTSFSDPGVI…NCVGKRNYRY (99 aa). One can recognise a DHHC domain in the interval 139–189; it reads KYCYTCKIFRPPRASHCSICDNCVERFDHHCPWVGNCVGKRNYRYFYLFIL. The active-site S-palmitoyl cysteine intermediate is Cys169. Residues 184–204 traverse the membrane as a helical segment; that stretch reads FYLFILSLSLLTIYVFAFNIV. The Lumenal segment spans residues 205-228; the sequence is YVALKSLKIGFLETLKETPGTVLE. The helical transmembrane segment at 229 to 249 threads the bilayer; it reads VLICFFTLWSVVGLTGFHTFL. Residues 250–364 are Cytoplasmic-facing; the sequence is VALNQTTNED…PPQEAAEAEK (115 aa). The tract at residues 303–364 is disordered; the sequence is PLEESGSRPP…PPQEAAEAEK (62 aa). A compositionally biased stretch (polar residues) spans 310–323; sequence RPPSTQETSSSLLP. A compositionally biased stretch (pro residues) spans 346–356; that stretch reads EMPPPEPPEPP.

The protein belongs to the DHHC palmitoyltransferase family. ERF2/ZDHHC9 subfamily. As to quaternary structure, interacts with GOLGA7. Highly expressed in kidney, skeletal muscle, brain, lung and liver. Absent in thymus, spleen and leukocytes.

The protein localises to the endoplasmic reticulum membrane. The protein resides in the golgi apparatus membrane. It carries out the reaction L-cysteinyl-[protein] + hexadecanoyl-CoA = S-hexadecanoyl-L-cysteinyl-[protein] + CoA. Functionally, palmitoyltransferase that catalyzes the addition of palmitate onto various protein substrates, such as ADRB2, GSDMD, HRAS, NRAS and CGAS. The ZDHHC9-GOLGA7 complex is a palmitoyltransferase specific for HRAS and NRAS. May have a palmitoyltransferase activity toward the beta-2 adrenergic receptor/ADRB2 and therefore regulate G protein-coupled receptor signaling. Acts as a regulator of innate immunity by catalyzing palmitoylation of CGAS, thereby promoting CGAS homodimerization and cyclic GMP-AMP synthase activity. Activates pyroptosis by catalyzing palmitoylation of gasdermin-D (GSDMD), thereby promoting membrane translocation and pore formation of GSDMD. Its function is as follows. (Microbial infection) Through a sequential action with ZDHHC20, rapidly and efficiently palmitoylates SARS coronavirus-2/SARS-CoV-2 spike protein following its synthesis in the endoplasmic reticulum (ER). In the infected cell, promotes spike biogenesis by protecting it from premature ER degradation, increases half-life and controls the lipid organization of its immediate membrane environment. Once the virus has formed, spike palmitoylation controls fusion with the target cell. The chain is Palmitoyltransferase ZDHHC9 from Homo sapiens (Human).